A 477-amino-acid chain; its full sequence is P3 protein (477 aa).

The interval 1–21 (MVFRSGEGHSLQWPGPEGGTG) is disordered. 8 helical membrane passes run 225–245 (PMLL…FLMA), 253–273 (ALAL…SYLF), 281–301 (VTLA…FLPL), 320–340 (VSKI…GVVI), 361–381 (VLLL…LAGV), 383–403 (LPIV…GYGL), 417–437 (VSIE…QLSL), and 450–470 (FLVA…HFIY).

The protein belongs to the bile acid:sodium symporter (BASS) (TC 2.A.28) family.

It is found in the membrane. Functionally, the ubiquitous expression and the conservation of the sequence in distant animal species suggest that the gene codes for a protein with housekeeping functions. The protein is P3 protein (SLC10A3) of Bos taurus (Bovine).